The chain runs to 323 residues: o-succinylbenzoate synthase (323 aa).

Lysine 134 (proton donor) is an active-site residue. Mg(2+) is bound by residues aspartate 162, glutamate 191, and aspartate 214. Residue lysine 236 is the Proton acceptor of the active site.

This sequence belongs to the mandelate racemase/muconate lactonizing enzyme family. MenC type 1 subfamily. Requires a divalent metal cation as cofactor.

The catalysed reaction is (1R,6R)-6-hydroxy-2-succinyl-cyclohexa-2,4-diene-1-carboxylate = 2-succinylbenzoate + H2O. It functions in the pathway quinol/quinone metabolism; 1,4-dihydroxy-2-naphthoate biosynthesis; 1,4-dihydroxy-2-naphthoate from chorismate: step 4/7. It participates in quinol/quinone metabolism; menaquinone biosynthesis. Functionally, converts 2-succinyl-6-hydroxy-2,4-cyclohexadiene-1-carboxylate (SHCHC) to 2-succinylbenzoate (OSB). The protein is o-succinylbenzoate synthase of Yersinia pseudotuberculosis serotype O:3 (strain YPIII).